The primary structure comprises 177 residues: Large ribosomal subunit protein uL6 (177 aa).

Belongs to the universal ribosomal protein uL6 family. As to quaternary structure, part of the 50S ribosomal subunit.

Its function is as follows. This protein binds to the 23S rRNA, and is important in its secondary structure. It is located near the subunit interface in the base of the L7/L12 stalk, and near the tRNA binding site of the peptidyltransferase center. The chain is Large ribosomal subunit protein uL6 from Cellvibrio japonicus (strain Ueda107) (Pseudomonas fluorescens subsp. cellulosa).